The primary structure comprises 910 residues: DNA mismatch repair protein MutS (910 aa).

The span at 1-11 (MEAKVEEKEPE) shows a compositional bias: basic and acidic residues. Residues 1–21 (MEAKVEEKEPEPVENAGPDAP) form a disordered region. 658-665 (GPNMGGKS) is an ATP binding site.

Belongs to the DNA mismatch repair MutS family.

Functionally, this protein is involved in the repair of mismatches in DNA. It is possible that it carries out the mismatch recognition step. This protein has a weak ATPase activity. The protein is DNA mismatch repair protein MutS of Brucella abortus (strain 2308).